The sequence spans 167 residues: Regulator of sigma D (167 aa).

Belongs to the Rsd/AlgQ family. Interacts with RpoD.

The protein localises to the cytoplasm. Binds RpoD and negatively regulates RpoD-mediated transcription activation by preventing the interaction between the primary sigma factor RpoD with the catalytic core of the RNA polymerase and with promoter DNA. May be involved in replacement of the RNA polymerase sigma subunit from RpoD to RpoS during the transition from exponential growth to the stationary phase. The protein is Regulator of sigma D of Yersinia enterocolitica serotype O:8 / biotype 1B (strain NCTC 13174 / 8081).